A 503-amino-acid chain; its full sequence is Putative acyl--CoA ligase YdaB (503 aa).

It belongs to the ATP-dependent AMP-binding enzyme family.

The sequence is that of Putative acyl--CoA ligase YdaB (ydaB) from Bacillus subtilis (strain 168).